The sequence spans 159 residues: uncharacterized protein (159 aa).

The N-terminal stretch at 1 to 20 (MKKIIAMSLLMFSVVMSVNA) is a signal peptide.

This is an uncharacterized protein from Pasteurella multocida (strain Pm70).